Reading from the N-terminus, the 125-residue chain is Large ribosomal subunit protein bL12 (125 aa).

It belongs to the bacterial ribosomal protein bL12 family. As to quaternary structure, homodimer. Part of the ribosomal stalk of the 50S ribosomal subunit. Forms a multimeric L10(L12)X complex, where L10 forms an elongated spine to which 2 to 4 L12 dimers bind in a sequential fashion. Binds GTP-bound translation factors.

Its function is as follows. Forms part of the ribosomal stalk which helps the ribosome interact with GTP-bound translation factors. Is thus essential for accurate translation. The chain is Large ribosomal subunit protein bL12 from Coprothermobacter proteolyticus (strain ATCC 35245 / DSM 5265 / OCM 4 / BT).